A 301-amino-acid chain; its full sequence is Homeobox protein Nkx-2.6 (301 aa).

Positions 22–135 (ERSCPAASPH…QPKARQRRKP (114 aa)) are disordered. The segment at residues 132 to 191 (RRKPRVLFSQAQVLALERRFKQQRYLSAPEREHLASALQLTSTQVKIWFQNRRYKCKRQR) is a DNA-binding region (homeobox).

This sequence belongs to the NK-2 homeobox family.

It is found in the nucleus. Functionally, acts as a transcriptional activator. In conjunction with NKX2-5, may play a role in both pharyngeal and cardiac embryonic development. The polypeptide is Homeobox protein Nkx-2.6 (NKX2-6) (Homo sapiens (Human)).